The chain runs to 476 residues: MKISLPAFEKANVLVVGDVMLDRYWSGPTGRISPEAPVPVVRVNQIEDRPGGAANVALNIATLGGQVSLAGIVGEDETAAALTQGIEALGVVPKWHTVAELPTITKLRVMSRNQQLIRLDFEEAYPAEQSLALLASAEKELDKVAVVVLSDYAKGAIDKPEAFIAKAKAKGVKVLVDPKGSDFSRYRGATLLTPNMSEFEQVVGKVADEADLVTKAKELLKEFDFEALLVTRSEKGMTLITADAPELHIPTVAHEVYDVTGAGDTVISALATSLAVGCELPVACALANTAAGIVVGKLGTSTVSRIELIAALNLSHGESGYGVVSEDQLAYALEQAKLKGERVVMTNGCFDILHAGHVSYLQQARALGDRLIVAVNDDDSVKRLKGDGRPVNKLDRRMAVLAGLASVDWVVPFSEDTPQRIISRLLPNKLVKGGDYNVEDIAGGKEVIAAGGSVEVLGFEDGVSTTAIIENIMAKQ.

The interval 1–319 is ribokinase; it reads MKISLPAFEK…AALNLSHGES (319 aa). Position 195 to 198 (195 to 198) interacts with ATP; the sequence is NMSE. The active site involves Asp264. The segment at 345–476 is cytidylyltransferase; sequence MTNGCFDILH…AIIENIMAKQ (132 aa).

It in the N-terminal section; belongs to the carbohydrate kinase PfkB family. This sequence in the C-terminal section; belongs to the cytidylyltransferase family. In terms of assembly, homodimer.

It carries out the reaction D-glycero-beta-D-manno-heptose 7-phosphate + ATP = D-glycero-beta-D-manno-heptose 1,7-bisphosphate + ADP + H(+). The catalysed reaction is D-glycero-beta-D-manno-heptose 1-phosphate + ATP + H(+) = ADP-D-glycero-beta-D-manno-heptose + diphosphate. It participates in nucleotide-sugar biosynthesis; ADP-L-glycero-beta-D-manno-heptose biosynthesis; ADP-L-glycero-beta-D-manno-heptose from D-glycero-beta-D-manno-heptose 7-phosphate: step 1/4. Its pathway is nucleotide-sugar biosynthesis; ADP-L-glycero-beta-D-manno-heptose biosynthesis; ADP-L-glycero-beta-D-manno-heptose from D-glycero-beta-D-manno-heptose 7-phosphate: step 3/4. In terms of biological role, catalyzes the phosphorylation of D-glycero-D-manno-heptose 7-phosphate at the C-1 position to selectively form D-glycero-beta-D-manno-heptose-1,7-bisphosphate. Functionally, catalyzes the ADP transfer from ATP to D-glycero-beta-D-manno-heptose 1-phosphate, yielding ADP-D-glycero-beta-D-manno-heptose. The sequence is that of Bifunctional protein HldE from Shewanella loihica (strain ATCC BAA-1088 / PV-4).